An 87-amino-acid polypeptide reads, in one-letter code: Retinal rod rhodopsin-sensitive cGMP 3',5'-cyclic phosphodiesterase subunit gamma (87 aa).

Methionine 1 is modified (N-acetylmethionine). The disordered stretch occupies residues valine 16–isoleucine 54. Positions glycine 26–lysine 44 are enriched in basic residues.

Belongs to the rod/cone cGMP-PDE gamma subunit family. Oligomer composed of two catalytic chains (alpha and beta), an inhibitory chain (gamma) and the delta chain.

The enzyme catalyses 3',5'-cyclic GMP + H2O = GMP + H(+). Functionally, participates in processes of transmission and amplification of the visual signal. cGMP-PDEs are the effector molecules in G-protein-mediated phototransduction in vertebrate rods and cones. This is Retinal rod rhodopsin-sensitive cGMP 3',5'-cyclic phosphodiesterase subunit gamma (PDE6G) from Cavia porcellus (Guinea pig).